The sequence spans 261 residues: Probable septum site-determining protein MinC (261 aa).

The protein belongs to the MinC family. As to quaternary structure, interacts with MinD and FtsZ.

Its function is as follows. Cell division inhibitor that blocks the formation of polar Z ring septums. Rapidly oscillates between the poles of the cell to destabilize FtsZ filaments that have formed before they mature into polar Z rings. Prevents FtsZ polymerization. This Burkholderia cenocepacia (strain ATCC BAA-245 / DSM 16553 / LMG 16656 / NCTC 13227 / J2315 / CF5610) (Burkholderia cepacia (strain J2315)) protein is Probable septum site-determining protein MinC.